Here is a 175-residue protein sequence, read N- to C-terminus: Nucleoside triphosphate/diphosphate phosphatase (175 aa).

The active-site Proton donor is the arginine 23. Mg(2+)-binding residues include asparagine 87, aspartate 103, aspartate 105, aspartate 107, aspartate 120, and glutamate 123.

This sequence belongs to the Ntdp family. Requires Mg(2+) as cofactor.

The enzyme catalyses a ribonucleoside 5'-triphosphate + H2O = a ribonucleoside 5'-diphosphate + phosphate + H(+). It carries out the reaction a ribonucleoside 5'-diphosphate + H2O = a ribonucleoside 5'-phosphate + phosphate + H(+). Functionally, has nucleoside phosphatase activity towards nucleoside triphosphates and nucleoside diphosphates. This is Nucleoside triphosphate/diphosphate phosphatase from Listeria monocytogenes serotype 4b (strain CLIP80459).